The chain runs to 307 residues: F-box protein At2g23160 (307 aa).

Residues 2 to 49 (NSSSPISIDLIAEILSRVPSKSVARFRCVSKPWASMIRRPYFTELFLT) form the F-box domain.

This chain is F-box protein At2g23160, found in Arabidopsis thaliana (Mouse-ear cress).